A 212-amino-acid polypeptide reads, in one-letter code: Thymidylate kinase (212 aa).

An ATP-binding site is contributed by 10–17 (GLEGAGKT).

The protein belongs to the thymidylate kinase family.

The catalysed reaction is dTMP + ATP = dTDP + ADP. Its function is as follows. Phosphorylation of dTMP to form dTDP in both de novo and salvage pathways of dTTP synthesis. The protein is Thymidylate kinase of Yersinia pestis bv. Antiqua (strain Antiqua).